A 110-amino-acid chain; its full sequence is Flagellar hook-basal body complex protein FliE (110 aa).

Belongs to the FliE family.

It localises to the bacterial flagellum basal body. The protein is Flagellar hook-basal body complex protein FliE of Pseudomonas entomophila (strain L48).